A 633-amino-acid polypeptide reads, in one-letter code: Shootin-1 (633 aa).

An N-acetylmethionine modification is found at Met1. Residues Ser3 and Ser4 each carry the phosphoserine modification. Residues 7–353 are a coiled coil; the sequence is EKQLQLITSL…RVNQSENSVP (347 aa). A phosphoserine; by PAK1 mark is found at Ser101 and Ser249. Residues 343–508 are disordered; the sequence is KRVNQSENSV…LATSESKSMP (166 aa). The segment covering 352–369 has biased composition (pro residues); that stretch reads VPPPPPPPPPLPPPPPNP. Ser375 is modified (phosphoserine). The span at 403-418 shows a compositional bias: basic and acidic residues; it reads TDLKRQAVEEMMDRIK. Residues 456 to 465 show a composition bias toward polar residues; sequence LNKSTSSRSL. Phosphoserine is present on Ser473. Thr487 is modified (phosphothreonine). Positions 490–505 are enriched in polar residues; sequence ADSSSPTGILATSESK. Position 494 is a phosphoserine (Ser494). Thr496 carries the phosphothreonine modification. Residues Ser506 and Ser515 each carry the phosphoserine modification. Residues 525-633 form a disordered region; the sequence is TLEAEFNNPC…KTGETDSSNC (109 aa). Thr537 is subject to Phosphothreonine. Over residues 550 to 559 the composition is skewed to polar residues; it reads CTNSKVTFQP. Residues 590–621 show a composition bias toward basic and acidic residues; it reads PQTKDQAAEKDPTQCKEEERGETQPEFKEDSS.

This sequence belongs to the shootin family. As to quaternary structure, interacts with PFN2. Interacts (via N-terminus) with KIF20B; this interaction is direct and promotes the association of SHTN1 to microtubules in primary neurons. Associates with microtubule. Interacts with L1CAM; this interaction occurs in axonal growth cones. Interacts with actin filament retrograde flow; this interaction is enhanced in a netrin-1- and PAK1-dependent manner and promotes F-actin-substrate coupling and concomitant formation of traction forces at axonal growth cones. Interacts with RUFY3. Post-translationally, phosphorylated on Ser-101 and Ser-249 by PAK1 through a CDC42- and RAC1-dependent signaling pathway, which enhances its association with F-actin retrograde flow in filopodia and lamellipodia of axonal growth cones. Phosphorylation on Ser-101 and Ser-249 is increased by netrin-1. As to expression, brain-specific (at protein level). Expressed in hippocampal neurons.

The protein localises to the perikaryon. It is found in the cell projection. Its subcellular location is the axon. The protein resides in the growth cone. It localises to the cytoplasm. The protein localises to the cytoskeleton. It is found in the filopodium. Its subcellular location is the lamellipodium. Involved in the generation of internal asymmetric signals required for neuronal polarization and neurite outgrowth. Mediates netrin-1-induced F-actin-substrate coupling or 'clutch engagement' within the axon growth cone through activation of CDC42, RAC1 and PAK1-dependent signaling pathway, thereby converting the F-actin retrograde flow into traction forces, concomitantly with filopodium extension and axon outgrowth. Plays a role in cytoskeletal organization by regulating the subcellular localization of phosphoinositide 3-kinase (PI3K) activity at the axonal growth cone. Also plays a role in regenerative neurite outgrowth. In the developing cortex, cooperates with KIF20B to promote both the transition from the multipolar to the bipolar stage and the radial migration of cortical neurons from the ventricular zone toward the superficial layer of the neocortex. Involved in the accumulation of phosphatidylinositol 3,4,5-trisphosphate (PIP3) in the growth cone of primary hippocampal neurons. This chain is Shootin-1, found in Rattus norvegicus (Rat).